Here is a 741-residue protein sequence, read N- to C-terminus: D-(-)-3-hydroxybutyrate oligomer hydrolase (741 aa).

The first 23 residues, 1-23, serve as a signal peptide directing secretion; the sequence is MKTIQGKSPGRWYSRGMLLAAMA. A disordered region spans residues 45-68; the sequence is NGNAGGNGNNNGNNNGNTVSNTKP. Ser338 (charge relay system) is an active-site residue.

This sequence belongs to the D-(-)-3-hydroxybutyrate oligomer hydrolase family.

The protein resides in the secreted. It catalyses the reaction (3R)-hydroxybutanoate dimer + H2O = 2 (R)-3-hydroxybutanoate + H(+). It functions in the pathway lipid metabolism; butanoate metabolism. Participates in the degradation of poly-3-hydroxybutyrate (PHB). It works downstream of poly(3-hydroxybutyrate) depolymerase, hydrolyzing D(-)-3-hydroxybutyrate oligomers of various length (3HB-oligomers) into 3HB-monomers. In Ralstonia pickettii (Burkholderia pickettii), this protein is D-(-)-3-hydroxybutyrate oligomer hydrolase.